A 2150-amino-acid chain; its full sequence is Hybrid signal transduction histidine kinase A (2150 aa).

Residues 1–10 show a composition bias toward basic and acidic residues; that stretch reads MELKTFKDLN. Disordered regions lie at residues 1–41, 68–149, 184–267, 286–323, 339–359, 415–505, 520–546, and 560–733; these read MELK…QQQQ, HIPQ…YYYS, NSSS…HQRR, KNKPLSSSTPSTVNTCGAVNNNSNNNNNNNNNSTGSLG, TEESTGGNNSPRSNCGSNCGS, NNNN…NSPR, SLTSSNNNNQSNNNTNPSINNNNGRNG, and KPVV…NGAT. A compositionally biased stretch (polar residues) spans 19–32; the sequence is PVINTGDQPNPLRT. Residues 68–81 show a composition bias toward low complexity; sequence HIPQQLYQKQQQQQ. Polar residues predominate over residues 82-104; the sequence is HSHSYGNHSFIHNVSPTSPSYDI. 2 stretches are compositionally biased toward low complexity: residues 105-145 and 184-244; these read NNNN…YNNN and NSSS…NNNI. The segment covering 289–304 has biased composition (polar residues); that stretch reads PLSSSTPSTVNTCGAV. 3 stretches are compositionally biased toward low complexity: residues 305 to 318, 344 to 359, and 415 to 447; these read NNNSNNNNNNNNNS, GGNNSPRSNCGSNCGS, and NNNNNNINPNNNPNNSNNSNNNVSPRNNNHNIS. Residues 448–468 show a composition bias toward polar residues; the sequence is PRGSNISPRSNNGGSTTISPR. Composition is skewed to low complexity over residues 469-485, 520-545, and 565-600; these read NISNNNNIINNINNNNI, SLTSSNNNNQSNNNTNPSINNNNGRN, and NNGNNNNNNNTNNSTTSNNNITTNNNNNNNNNINNN. The span at 614–628 shows a compositional bias: polar residues; it reads SKTNSLQDFETSSMN. Positions 657–727 are enriched in low complexity; the sequence is NSNNTNSNNS…NNNNNNNNNN (71 aa). A helical transmembrane segment spans residues 772–792; that stretch reads AIILGLFIVGSSISILATLVL. The 245-residue stretch at 838 to 1082 folds into the CHASE domain; it reads STSEDQFVPF…NVGGRNWMIA (245 aa). The helical transmembrane segment at 1098–1118 threads the bilayer; it reads PYAIGGVCMLLSALVSFWFAV. Residues 1139 to 1164 adopt a coiled-coil conformation; sequence NRKLAEKALAESQERLELAMEGSEDA. 2 disordered regions span residues 1209–1228 and 1233–1252; these read LNFKGDSKNGGSNNGTFNLF and VDSSSPQSITNVNTTNGGGG. In terms of domain architecture, PAS spans 1235-1317; it reads SSSPQSITNV…SEIKKTITRE (83 aa). The PAC domain occupies 1321–1376; sequence MEIECRMRKKYGGYLYIIMRGKVVSNETSFKDNSLRMAGTLRDMTSRKDMQRLILE. In terms of domain architecture, Histidine kinase spans 1393–1620; sequence TVSHEVRTPL…KFKCIIPFLL (228 aa). His-1396 is modified (phosphohistidine; by autocatalysis). 3 disordered regions span residues 1874–1893, 1933–1952, and 1962–2017; these read GGGSNTMNGSSGNLSNNNNF, HGNQQQQLYQQQQQQQNNSS, and QNNN…DTPV. 3 stretches are compositionally biased toward low complexity: residues 1878–1893, 1935–1952, and 1962–2002; these read NTMNGSSGNLSNNNNF, NQQQQLYQQQQQQQNNSS, and QNNN…TPTL. Residues 2026–2146 form the Response regulatory domain; sequence KALIVEDNEL…TLKDALAKWG (121 aa). At Asp-2076 the chain carries 4-aspartylphosphate.

Interacts with SDF-2, an acbA peptide involved in sporulation.

It is found in the cell membrane. It carries out the reaction ATP + protein L-histidine = ADP + protein N-phospho-L-histidine.. Its function is as follows. Acts as a receptor histidine kinase for the cytokinin SDF-2 in a signal transduction pathway that regulates prestalk gene expression and controls terminal differentiation of prespore cells. Binding of SDF-2 to this protein inhibits phosphorelay and induces rapid sporulation. This protein undergoes an ATP-dependent autophosphorylation at a conserved histidine residue in the kinase core, and a phosphoryl group is then transferred to a conserved aspartate residue in the receiver domain. The protein is Hybrid signal transduction histidine kinase A (dhkA) of Dictyostelium discoideum (Social amoeba).